Reading from the N-terminus, the 706-residue chain is Glutamine-dependent NAD(+) synthetase (706 aa).

Residues 5–275 (VTVATCALNQ…VEVLTATLDL (271 aa)) form the CN hydrolase domain. The active-site Proton acceptor; for glutaminase activity is the E45. The active-site For glutaminase activity is K114. The active-site Nucleophile; for glutaminase activity is C175. Positions 325 to 706 (YHSPEEEISL…AEPQSLDGVD (382 aa)) are ligase. 355 to 362 (PLSGGVDS) serves as a coordination point for ATP. S357 is an active-site residue.

In the C-terminal section; belongs to the NAD synthetase family. Homohexamer.

It carries out the reaction deamido-NAD(+) + L-glutamine + ATP + H2O = L-glutamate + AMP + diphosphate + NAD(+) + H(+). The protein operates within cofactor biosynthesis; NAD(+) biosynthesis; NAD(+) from deamido-NAD(+) (L-Gln route): step 1/1. Functionally, catalyzes the final step of the nicotinamide adenine dinucleotide (NAD) de novo synthesis pathway, the ATP-dependent amidation of deamido-NAD using L-glutamine as a nitrogen source. The chain is Glutamine-dependent NAD(+) synthetase (NADSYN1) from Homo sapiens (Human).